Reading from the N-terminus, the 87-residue chain is Sodium channel neurotoxin MeuNaTxalpha-5* (87 aa).

Positions 1–19 (MNYLILISFALLVITGVES) are cleaved as a signal peptide. The region spanning 21–85 (RDAYIAKPHN…VPIRIPGKCH (65 aa)) is the LCN-type CS-alpha/beta domain. Intrachain disulfides connect cysteine 31–cysteine 84, cysteine 35–cysteine 57, cysteine 43–cysteine 67, and cysteine 47–cysteine 69. Residues 86–87 (RR) constitute a propeptide, removed by a carboxypeptidase.

The protein belongs to the long (4 C-C) scorpion toxin superfamily. Sodium channel inhibitor family. Alpha subfamily. As to expression, expressed by the venom gland.

Its subcellular location is the secreted. In terms of biological role, alpha toxins bind voltage-independently at site-3 of sodium channels (Nav) and inhibit the inactivation of the activated channels, thereby blocking neuronal transmission. This toxin inhibits inactivation of Nav1.6/SCN8A (EC(50)=790 nM) and drosophila DmNav1 (EC(50)=280 nM). The toxin (1 uM) does not significantly shift the midpoint of activation at the two channels, but induces a significant depolarizing shift in the V(1/2) of inactivation of the channels. Has antimicrobial activity. The chain is Sodium channel neurotoxin MeuNaTxalpha-5* from Mesobuthus eupeus (Lesser Asian scorpion).